The following is a 119-amino-acid chain: Hydrogenase maturation factor HypA (119 aa).

Position 2 (H2) interacts with Ni(2+). C73, C76, C89, and C92 together coordinate Zn(2+).

It belongs to the HypA/HybF family.

Functionally, involved in the maturation of [NiFe] hydrogenases. Required for nickel insertion into the metal center of the hydrogenase. This is Hydrogenase maturation factor HypA from Cupriavidus necator (strain ATCC 17699 / DSM 428 / KCTC 22496 / NCIMB 10442 / H16 / Stanier 337) (Ralstonia eutropha).